The sequence spans 113 residues: Urease subunit beta (113 aa).

The protein belongs to the urease beta subunit family. Heterotrimer of UreA (gamma), UreB (beta) and UreC (alpha) subunits. Three heterotrimers associate to form the active enzyme.

Its subcellular location is the cytoplasm. The enzyme catalyses urea + 2 H2O + H(+) = hydrogencarbonate + 2 NH4(+). It participates in nitrogen metabolism; urea degradation; CO(2) and NH(3) from urea (urease route): step 1/1. The polypeptide is Urease subunit beta (Cyanothece sp. (strain PCC 7425 / ATCC 29141)).